Reading from the N-terminus, the 250-residue chain is 5'-nucleotidase SurE (250 aa).

Residues D8, D9, S39, and N91 each contribute to the a divalent metal cation site.

Belongs to the SurE nucleotidase family. It depends on a divalent metal cation as a cofactor.

It is found in the cytoplasm. It catalyses the reaction a ribonucleoside 5'-phosphate + H2O = a ribonucleoside + phosphate. Functionally, nucleotidase that shows phosphatase activity on nucleoside 5'-monophosphates. The chain is 5'-nucleotidase SurE from Shewanella halifaxensis (strain HAW-EB4).